The primary structure comprises 512 residues: ETS translocation variant 3 (512 aa).

The ETS DNA-binding region spans 35 to 116 (IQLWHFILEL…KGKRFTYKFN (82 aa)). Positions 136–222 (VPQSAPPVPT…NAIGGGGIGH (87 aa)) are disordered. A phosphoserine mark is found at serine 139, serine 159, and serine 315. The span at 158 to 184 (HSPTNDVQPGRFSASSLTASGQESSNG) shows a compositional bias: polar residues. A disordered region spans residues 336-512 (PEESTQFSIK…QGLATAAADA (177 aa)). 3 stretches are compositionally biased toward basic and acidic residues: residues 380–406 (IKVEPASEKDPESLRQSAREKEEHTQE), 453–468 (DRPGKEPSAPEKKEDA), and 479–491 (RWNDDPEARELSK). A Glycyl lysine isopeptide (Lys-Gly) (interchain with G-Cter in SUMO2) cross-link involves residue lysine 381. At lysine 388 the chain carries N6-acetyllysine; alternate. Residue lysine 388 forms a Glycyl lysine isopeptide (Lys-Gly) (interchain with G-Cter in SUMO2); alternate linkage.

The protein belongs to the ETS family.

The protein resides in the nucleus. Transcriptional repressor that contribute to growth arrest during terminal macrophage differentiation by repressing target genes involved in Ras-dependent proliferation. Represses MMP1 promoter activity. This Homo sapiens (Human) protein is ETS translocation variant 3 (ETV3).